Reading from the N-terminus, the 1323-residue chain is Sister chromatid cohesion protein PDS5 homolog A-B (1323 aa).

The HEAT repeat unit spans residues 385–421 (FLVNDQLLGFVRERTLDKRWRVRKEAMMGLAQLYKKY). The interval 1138 to 1323 (PLNATGRRPY…TAQRQIDLHR (186 aa)) is disordered. A compositionally biased stretch (low complexity) spans 1153–1165 (SEISNNVSINSES). Composition is skewed to polar residues over residues 1166–1176 (DASVANRQSSE) and 1210–1220 (LDQTAPSNTGT). Positions 1235-1246 (NIRKESEEKKVD) are enriched in basic and acidic residues.

As to quaternary structure, interacts with the cohesin complex. Binds chromatin in a cohesin-dependent manner.

The protein localises to the nucleus. Its function is as follows. May regulate sister chromatid cohesion during mitosis and couple it to DNA replication. The polypeptide is Sister chromatid cohesion protein PDS5 homolog A-B (pds5a-b) (Xenopus laevis (African clawed frog)).